Reading from the N-terminus, the 738-residue chain is uncharacterized protein (738 aa).

Residues 1–10 (MQKKVVQSAS) are compositionally biased toward polar residues. Disordered regions lie at residues 1-23 (MQKKVVQSASKNEELDPHYKRSS), 53-83 (EGTHSASVHPSTSSTSHISSPSAFSVQNPNP), and 219-266 (HQDG…PLST). The span at 55–77 (THSASVHPSTSSTSHISSPSAFS) shows a compositional bias: low complexity. Residues 246–266 (GSPSPNRSLNVSNNTTPPLST) are compositionally biased toward polar residues. 2 positions are modified to phosphothreonine: Thr-260 and Thr-261. Residues 292-318 (CAKCQKDNKKCDDARPCQRCIKAKTDC) constitute a DNA-binding region (zn(2)-C6 fungal-type). The span at 323–335 (RKKRPTGVRRGPY) shows a compositional bias: basic residues. Disordered regions lie at residues 323-372 (RKKR…SDNQ) and 441-464 (DETGTSSAGSKPFNRKSRNRSFTN). The segment covering 340–352 (DTSNNTKSTTASS) has biased composition (low complexity). The span at 353-372 (GHSTQDSLSSKMLDPSSDNQ) shows a compositional bias: polar residues.

The protein resides in the cytoplasm. The protein localises to the nucleus. This is an uncharacterized protein from Schizosaccharomyces pombe (strain 972 / ATCC 24843) (Fission yeast).